The sequence spans 567 residues: Periplasmic [NiFe] hydrogenase large subunit (567 aa).

Glutamate 62 contacts Mg(2+). 2 residues coordinate Ni(2+): cysteine 81 and cysteine 84. A Fe cation-binding site is contributed by cysteine 84. A Mg(2+)-binding site is contributed by leucine 498. Positions 546 and 549 each coordinate Ni(2+). Residue cysteine 549 coordinates Fe cation. A Mg(2+)-binding site is contributed by histidine 552. Positions 553-567 (VIDGHTNEVHKFRIL) are excised as a propeptide.

It belongs to the [NiFe]/[NiFeSe] hydrogenase large subunit family. In terms of assembly, heterodimer of a large and a small subunit. It depends on Ni(2+) as a cofactor. Requires Fe cation as cofactor.

Its subcellular location is the periplasm. It carries out the reaction 2 Fe(III)-[cytochrome c3] + H2 = 2 Fe(II)-[cytochrome c3] + 2 H(+). Its function is as follows. Catalyzes the reversible oxidoreduction of molecular hydrogen, in conjunction with a specific electron acceptor, cytochrome c3. The sequence is that of Periplasmic [NiFe] hydrogenase large subunit (hydB) from Nitratidesulfovibrio vulgaris (strain DSM 19637 / Miyazaki F) (Desulfovibrio vulgaris).